The primary structure comprises 153 residues: Ribosomal RNA large subunit methyltransferase H (153 aa).

Residues Leu-75, Gly-102, and 121–126 (LSKLTL) contribute to the S-adenosyl-L-methionine site.

It belongs to the RNA methyltransferase RlmH family. In terms of assembly, homodimer.

The protein localises to the cytoplasm. It carries out the reaction pseudouridine(1915) in 23S rRNA + S-adenosyl-L-methionine = N(3)-methylpseudouridine(1915) in 23S rRNA + S-adenosyl-L-homocysteine + H(+). Functionally, specifically methylates the pseudouridine at position 1915 (m3Psi1915) in 23S rRNA. The sequence is that of Ribosomal RNA large subunit methyltransferase H from Campylobacter jejuni (strain RM1221).